The primary structure comprises 186 residues: Large ribosomal subunit protein uL6 (186 aa).

The protein belongs to the universal ribosomal protein uL6 family. In terms of assembly, part of the 50S ribosomal subunit.

Functionally, this protein binds to the 23S rRNA, and is important in its secondary structure. It is located near the subunit interface in the base of the L7/L12 stalk, and near the tRNA binding site of the peptidyltransferase center. This chain is Large ribosomal subunit protein uL6, found in Ignicoccus hospitalis (strain KIN4/I / DSM 18386 / JCM 14125).